We begin with the raw amino-acid sequence, 238 residues long: Survival of motor neuron-related-splicing factor 30 (238 aa).

The 61-residue stretch at 72–132 (SWKVGDKCMA…KPVEEGRKAK (61 aa)) folds into the Tudor domain. A Nuclear localization signal motif is present at residues 142-160 (KKEMIAQQREYKKKKALKK). S201 bears the Phosphoserine mark. K219 bears the N6-acetyllysine mark.

It belongs to the SMN family. As to quaternary structure, associates with spliceosomes. Associates with U4/U5/U6 tri-snRNP and with U2 snRNP.

The protein resides in the nucleus speckle. It is found in the nucleus. It localises to the cajal body. Functionally, involved in spliceosome assembly. This Bos taurus (Bovine) protein is Survival of motor neuron-related-splicing factor 30 (SMNDC1).